The sequence spans 207 residues: Large ribosomal subunit protein uL4 (207 aa).

Residues 55 to 76 (ALVSGGGKKPWRQKGTGRARHG) form a disordered region. The span at 63 to 76 (KPWRQKGTGRARHG) shows a compositional bias: basic residues.

The protein belongs to the universal ribosomal protein uL4 family. As to quaternary structure, part of the 50S ribosomal subunit.

In terms of biological role, one of the primary rRNA binding proteins, this protein initially binds near the 5'-end of the 23S rRNA. It is important during the early stages of 50S assembly. It makes multiple contacts with different domains of the 23S rRNA in the assembled 50S subunit and ribosome. Functionally, forms part of the polypeptide exit tunnel. This chain is Large ribosomal subunit protein uL4, found in Phytoplasma mali (strain AT).